The following is a 910-amino-acid chain: Valine--tRNA ligase (910 aa).

The 'HIGH' region motif lies at 45–55; that stretch reads PNVTGSLHMGH. The 'KMSKS' region signature appears at 554–558; the sequence is KMSKS. ATP is bound at residue Lys557. A coiled-coil region spans residues 842–910; it reads DLQAEAARLA…TAESRIRDAS (69 aa).

Belongs to the class-I aminoacyl-tRNA synthetase family. ValS type 1 subfamily. As to quaternary structure, monomer.

It is found in the cytoplasm. It carries out the reaction tRNA(Val) + L-valine + ATP = L-valyl-tRNA(Val) + AMP + diphosphate. In terms of biological role, catalyzes the attachment of valine to tRNA(Val). As ValRS can inadvertently accommodate and process structurally similar amino acids such as threonine, to avoid such errors, it has a 'posttransfer' editing activity that hydrolyzes mischarged Thr-tRNA(Val) in a tRNA-dependent manner. The polypeptide is Valine--tRNA ligase (Brucella suis biovar 1 (strain 1330)).